Reading from the N-terminus, the 283-residue chain is Pantothenate synthetase (283 aa).

Position 30–37 (30–37) interacts with ATP; the sequence is MGYYHAGH. Catalysis depends on His37, which acts as the Proton donor. Gln61 lines the (R)-pantoate pocket. Gln61 lines the beta-alanine pocket. ATP is bound at residue 147-150; that stretch reads GQKD. Residue Gln153 participates in (R)-pantoate binding. Residues Val176 and 184 to 187 each bind ATP; that span reads MSSR.

It belongs to the pantothenate synthetase family. As to quaternary structure, homodimer.

The protein resides in the cytoplasm. The enzyme catalyses (R)-pantoate + beta-alanine + ATP = (R)-pantothenate + AMP + diphosphate + H(+). Its pathway is cofactor biosynthesis; (R)-pantothenate biosynthesis; (R)-pantothenate from (R)-pantoate and beta-alanine: step 1/1. Catalyzes the condensation of pantoate with beta-alanine in an ATP-dependent reaction via a pantoyl-adenylate intermediate. This Nitratidesulfovibrio vulgaris (strain ATCC 29579 / DSM 644 / CCUG 34227 / NCIMB 8303 / VKM B-1760 / Hildenborough) (Desulfovibrio vulgaris) protein is Pantothenate synthetase.